The primary structure comprises 358 residues: 3-dehydroquinate synthase (358 aa).

NAD(+) is bound by residues 70–75 (DGEQFK), 104–108 (GVIGD), 128–129 (TT), lysine 141, lysine 150, and 168–171 (CLHT). Zn(2+) is bound by residues glutamate 183, histidine 246, and histidine 263.

The protein belongs to the sugar phosphate cyclases superfamily. Dehydroquinate synthase family. Co(2+) serves as cofactor. Zn(2+) is required as a cofactor. The cofactor is NAD(+).

The protein localises to the cytoplasm. The catalysed reaction is 7-phospho-2-dehydro-3-deoxy-D-arabino-heptonate = 3-dehydroquinate + phosphate. It participates in metabolic intermediate biosynthesis; chorismate biosynthesis; chorismate from D-erythrose 4-phosphate and phosphoenolpyruvate: step 2/7. Functionally, catalyzes the conversion of 3-deoxy-D-arabino-heptulosonate 7-phosphate (DAHP) to dehydroquinate (DHQ). In Shewanella baltica (strain OS185), this protein is 3-dehydroquinate synthase.